The following is a 105-amino-acid chain: Met repressor (105 aa).

This sequence belongs to the MetJ family. Homodimer.

The protein localises to the cytoplasm. In terms of biological role, this regulatory protein, when combined with SAM (S-adenosylmethionine) represses the expression of the methionine regulon and of enzymes involved in SAM synthesis. The sequence is that of Met repressor from Haemophilus ducreyi (strain 35000HP / ATCC 700724).